The following is a 538-amino-acid chain: Bifunctional purine biosynthesis protein PurH (538 aa).

In terms of domain architecture, MGS-like spans 11–158 (PDLHRVRRAL…KNHAYTGVVT (148 aa)).

It belongs to the PurH family.

It carries out the reaction (6R)-10-formyltetrahydrofolate + 5-amino-1-(5-phospho-beta-D-ribosyl)imidazole-4-carboxamide = 5-formamido-1-(5-phospho-D-ribosyl)imidazole-4-carboxamide + (6S)-5,6,7,8-tetrahydrofolate. The enzyme catalyses IMP + H2O = 5-formamido-1-(5-phospho-D-ribosyl)imidazole-4-carboxamide. It functions in the pathway purine metabolism; IMP biosynthesis via de novo pathway; 5-formamido-1-(5-phospho-D-ribosyl)imidazole-4-carboxamide from 5-amino-1-(5-phospho-D-ribosyl)imidazole-4-carboxamide (10-formyl THF route): step 1/1. It participates in purine metabolism; IMP biosynthesis via de novo pathway; IMP from 5-formamido-1-(5-phospho-D-ribosyl)imidazole-4-carboxamide: step 1/1. The polypeptide is Bifunctional purine biosynthesis protein PurH (Bartonella bacilliformis (strain ATCC 35685 / KC583 / Herrer 020/F12,63)).